A 762-amino-acid polypeptide reads, in one-letter code: LON peptidase N-terminal domain and RING finger protein 1 (762 aa).

The interval Met1–Glu35 is disordered. One copy of the TPR 1 repeat lies at Trp47–Ala80. The RING-type 1 zinc-finger motif lies at Cys118–Arg154. TPR repeat units follow at residues Ala201–Asp233, Thr235–Trp267, and Pro268–Phe301. Residue Ser420 is modified to Phosphoserine. The RING-type 2 zinc finger occupies Cys468 to Lys506. Positions Thr547–Ser757 constitute a Lon N-terminal domain.

In Mus musculus (Mouse), this protein is LON peptidase N-terminal domain and RING finger protein 1 (Lonrf1).